We begin with the raw amino-acid sequence, 348 residues long: Rhodopsin (348 aa).

Met-1 bears the N-acetylmethionine mark. The Extracellular segment spans residues 1 to 36 (MNGTEGPDFYIPMSNQTGVVRSPFEYPQYYLAEPWQ). Asn-2 and Asn-15 each carry an N-linked (GlcNAc...) asparagine glycan. A helical membrane pass occupies residues 37 to 61 (FSMLAAYMFLLIVLGFPINFLTLYV). The Cytoplasmic segment spans residues 62-73 (TVQHKKLRTPLN). A helical membrane pass occupies residues 74–96 (YILLNLAVADLFMVLGGFTTTLY). Topologically, residues 97 to 110 (TSLHGYFVFGPTGC) are extracellular. Residues Cys-110 and Cys-187 are joined by a disulfide bond. The chain crosses the membrane as a helical span at residues 111-133 (NVEGFFATLGGEIALWSLVVLAI). A 'Ionic lock' involved in activated form stabilization motif is present at residues 134–136 (ERY). Over 134-152 (ERYVVVCKPMSNFRFGENH) the chain is Cytoplasmic. Residues 153-173 (AIMGVAFTWIMALACAAPPLV) form a helical membrane-spanning segment. Residues 174-202 (GWSRYIPEGMQCSCGIDYYTLKPEVNNES) lie on the Extracellular side of the membrane. Position 201 (Glu-201) interacts with Zn(2+). The helical transmembrane segment at 203-224 (FVIYMFVVHFTIPLIIIFFCYG) threads the bilayer. Over 225–252 (QLVFTVKEAAAQQQESATTQKAEKEVTR) the chain is Cytoplasmic. The helical transmembrane segment at 253 to 274 (MVIIMVIAFLICWVPYASVAFY) threads the bilayer. At 275-286 (IFTHQGSNFGPI) the chain is on the extracellular side. Gln-279 serves as a coordination point for Zn(2+). Residues 287-308 (FMTIPAFFAKSSSIYNPVIYIM) traverse the membrane as a helical segment. Lys-296 is modified (N6-(retinylidene)lysine). Residues 309 to 348 (MNKQFRNCMLTTICCGKNPLGDDEASATASKTETSQVAPA) lie on the Cytoplasmic side of the membrane. 2 S-palmitoyl cysteine lipidation sites follow: Cys-322 and Cys-323. An interaction with SAG region spans residues 330–348 (DDEASATASKTETSQVAPA). Ser-334 is modified (phosphoserine). At Thr-336 the chain carries Phosphothreonine. Ser-338 is subject to Phosphoserine. Phosphothreonine occurs at positions 340 and 342. A Phosphoserine modification is found at Ser-343.

Belongs to the G-protein coupled receptor 1 family. Opsin subfamily. Homodimer. May form a complex composed of RHO, GRK1 and RCVRN in a Ca(2+)-dependent manner; RCVRN prevents the interaction between GRK1 and RHO. Interacts with GRK1. Interacts (phosphorylated form) with SAG. Interacts with GNAT1. Interacts with GNAT3. SAG and G-proteins compete for a common binding site. Interacts with PRCD; the interaction promotes PRCD stability. Forms a complex with ASAP1 and ARF4. Forms a complex with ASAP1, RAB11A, Rabin8/RAB3IP, ARF4 and RAB11FIP3; the complex regulates Golgi-to-cilia rhodopsin/RHO transport in photoreceptors. Post-translationally, phosphorylated on some or all of the serine and threonine residues present in the C-terminal region. Contains one covalently linked retinal chromophore. Upon light absorption, the covalently bound 11-cis-retinal is converted to all-trans-retinal. After hydrolysis of the Schiff base and release of the covalently bound all-trans-retinal, active rhodopsin is regenerated by binding of a fresh molecule of 11-cis-retinal.

The protein resides in the membrane. It is found in the cell projection. Its subcellular location is the cilium. It localises to the photoreceptor outer segment. Functionally, photoreceptor required for image-forming vision at low light intensity. Required for photoreceptor cell viability after birth. Light-induced isomerization of 11-cis to all-trans retinal triggers a conformational change that activates signaling via G-proteins. Subsequent receptor phosphorylation mediates displacement of the bound G-protein alpha subunit by the arrestin SAG and terminates signaling. The sequence is that of Rhodopsin (RHO) from Oryctolagus cuniculus (Rabbit).